Consider the following 1766-residue polypeptide: DNA-directed RNA polymerase II subunit RPB1-B (1766 aa).

Positions 69, 72, 79, and 82 each coordinate Zn(2+). Mg(2+) is bound by residues aspartate 487, aspartate 489, and aspartate 491. Residues 813-825 (PHEFFFHTMAGRE) are bridging helix. Residues 1660 to 1766 (HAMSSAAPPS…EFGDEEEEEQ (107 aa)) form a disordered region. Basic and acidic residues predominate over residues 1706-1716 (RGDEPSTHRSD). Residues 1742–1756 (PTAKTPQQAAPPTAA) are compositionally biased toward low complexity.

Belongs to the RNA polymerase beta' chain family. In terms of assembly, component of the RNA polymerase II (Pol II) complex consisting of 12 subunits.

The protein localises to the nucleus. It catalyses the reaction RNA(n) + a ribonucleoside 5'-triphosphate = RNA(n+1) + diphosphate. DNA-dependent RNA polymerase catalyzes the transcription of DNA into RNA using the four ribonucleoside triphosphates as substrates. Largest and catalytic component of RNA polymerase II which synthesizes mRNA precursors and many functional non-coding RNAs. Forms the polymerase active center together with the second largest subunit. Pol II is the central component of the basal RNA polymerase II transcription machinery. It is composed of mobile elements that move relative to each other. RPB1 is part of the core element with the central large cleft, the clamp element that moves to open and close the cleft and the jaws that are thought to grab the incoming DNA template. At the start of transcription, a single-stranded DNA template strand of the promoter is positioned within the central active site cleft of Pol II. A bridging helix emanates from RPB1 and crosses the cleft near the catalytic site and is thought to promote translocation of Pol II by acting as a ratchet that moves the RNA-DNA hybrid through the active site by switching from straight to bent conformations at each step of nucleotide addition. During transcription elongation, Pol II moves on the template as the transcript elongates. In Trypanosoma brucei brucei, this protein is DNA-directed RNA polymerase II subunit RPB1-B (TRP5.9).